The primary structure comprises 167 residues: Dimethylamine corrinoid protein 3 (167 aa).

One can recognise a B12-binding N-terminal domain in the interval 1–44 (MNEVGVRFERGKLFLPHVMMAADAMTAGVNALKDLMPEGSASSK). A B12-binding domain is found at 45-167 (MGVIVNGTVE…AVTKAKELLA (123 aa)). Histidine 58 contributes to the methylcob(III)alamin binding site.

This sequence belongs to the methylamine corrinoid protein family.

Its pathway is one-carbon metabolism; methanogenesis from dimethylamine. Its function is as follows. Acts as a methyl group carrier between MtbB and MtbA. This Methanosarcina mazei (strain ATCC BAA-159 / DSM 3647 / Goe1 / Go1 / JCM 11833 / OCM 88) (Methanosarcina frisia) protein is Dimethylamine corrinoid protein 3 (mtbC3).